The following is a 321-amino-acid chain: Sideroflexin-3 (321 aa).

Met1 carries the N-acetylmethionine modification. 4 consecutive transmembrane segments (helical) span residues 146–164 (LGTA…ALGL), 174–194 (LVGR…NIPL), 226–246 (FQVV…PPLI), and 266–286 (LQVG…CALF).

The protein belongs to the sideroflexin family.

It is found in the mitochondrion membrane. The catalysed reaction is L-serine(in) = L-serine(out). Functionally, mitochondrial serine transporter that mediates transport of serine into mitochondria, an important step of the one-carbon metabolism pathway. Mitochondrial serine is converted to glycine and formate, which then exits to the cytosol where it is used to generate the charged folates that serve as one-carbon donors. This Homo sapiens (Human) protein is Sideroflexin-3.